The chain runs to 590 residues: Beta-fructofuranosidase, cell wall isozyme (590 aa).

The first 28 residues, 1 to 28 (MGTRPRGVVLAPWAVVLVLVLALRLAGA), serve as a signal peptide directing secretion. Asp-68 is an active-site residue. 2 N-linked (GlcNAc...) asparagine glycosylation sites follow: Asn-190 and Asn-341.

It belongs to the glycosyl hydrolase 32 family.

It localises to the secreted. It is found in the cell wall. The enzyme catalyses Hydrolysis of terminal non-reducing beta-D-fructofuranoside residues in beta-D-fructofuranosides.. This chain is Beta-fructofuranosidase, cell wall isozyme, found in Zea mays (Maize).